A 122-amino-acid chain; its full sequence is Large ribosomal subunit protein uL14 (122 aa).

This sequence belongs to the universal ribosomal protein uL14 family. Part of the 50S ribosomal subunit. Forms a cluster with proteins L3 and L19. In the 70S ribosome, L14 and L19 interact and together make contacts with the 16S rRNA in bridges B5 and B8.

Binds to 23S rRNA. Forms part of two intersubunit bridges in the 70S ribosome. This Pseudomonas savastanoi pv. phaseolicola (strain 1448A / Race 6) (Pseudomonas syringae pv. phaseolicola (strain 1448A / Race 6)) protein is Large ribosomal subunit protein uL14.